We begin with the raw amino-acid sequence, 68 residues long: Conotoxin Cal12.1p3 (68 aa).

Residues 1-21 (DLITNSYTRGKPRHVTSWPKL) constitute a propeptide that is removed on maturation.

In terms of processing, contains 4 disulfide bonds. As to expression, expressed by the venom duct.

It is found in the secreted. The sequence is that of Conotoxin Cal12.1p3 from Californiconus californicus (California cone).